The sequence spans 251 residues: 2,3-bisphosphoglycerate-dependent phosphoglycerate mutase (251 aa).

Substrate is bound by residues 11–18 (RHGNSDWN), 24–25 (TG), Arg-63, 90–93 (ERHY), Lys-101, 117–118 (RR), and 185–186 (GN). The active-site Tele-phosphohistidine intermediate is the His-12. Glu-90 (proton donor/acceptor) is an active-site residue.

This sequence belongs to the phosphoglycerate mutase family. BPG-dependent PGAM subfamily.

The catalysed reaction is (2R)-2-phosphoglycerate = (2R)-3-phosphoglycerate. It participates in carbohydrate degradation; glycolysis; pyruvate from D-glyceraldehyde 3-phosphate: step 3/5. In terms of biological role, catalyzes the interconversion of 2-phosphoglycerate and 3-phosphoglycerate. The chain is 2,3-bisphosphoglycerate-dependent phosphoglycerate mutase from Clavibacter sepedonicus (Clavibacter michiganensis subsp. sepedonicus).